Reading from the N-terminus, the 1080-residue chain is Zorya protein ZorD (1080 aa).

Positions 596–779 constitute a Helicase ATP-binding domain; the sequence is LRSPEETAGC…WSLFDFAQPG (184 aa). The region spanning 904 to 1069 is the Helicase C-terminal domain; that stretch reads KLNWLLKILA…DMLCATPDLS (166 aa).

Component of antiviral defense system Zorya type I, composed of ZorA, ZorB, ZorC and ZorD. Expression of Zorya type I in E.coli (strain MG1655) confers 10,000-fold resistance to phage SECphi27, 100-fold resistance to lambda, and 10-fold resistance to T7. While most T7 infected Zorya-containing cells undergo abortive infection, a minority produce viable phage progeny. These eventually accumulate to a high multiplicity of infection, leading to culture collapse by 2 hours after initial infection. ZorA and ZorB probably assemble in the cell inner membrane and exert their effect there. This may have ATPase activity. The polypeptide is Zorya protein ZorD (Escherichia coli O139:H28 (strain E24377A / ETEC)).